The following is a 490-amino-acid chain: GTPase Der (490 aa).

EngA-type G domains follow at residues 3–166 and 203–376; these read PVVA…MEDL and IKLA…DSST. GTP-binding positions include 9 to 16, 56 to 60, 118 to 121, 209 to 216, 256 to 260, and 321 to 324; these read GRPNVGKS, DTGGI, NKTD, DTAGV, and NKWD. Residues 377-461 enclose the KH-like domain; it reads RRVGTSMLTR…PIRIQFKEGE (85 aa).

The protein belongs to the TRAFAC class TrmE-Era-EngA-EngB-Septin-like GTPase superfamily. EngA (Der) GTPase family. In terms of assembly, associates with the 50S ribosomal subunit.

Its function is as follows. GTPase that plays an essential role in the late steps of ribosome biogenesis. The chain is GTPase Der from Escherichia coli O157:H7.